Reading from the N-terminus, the 287-residue chain is MAGAKEIRSKIASVQNTQKITKAMEMVAASKMRKSQERMAASRPYAETMRSVIGHLALGNLEYKHPYLEERDVKRVGYLVVSTDRGLCGGLNINLFKKLLAEMKGWSEKGVECDLALIGSKAASFFGSVGGKIVAQVTGMGDNPSLSELIGPVKVMLQAYDEGRLDKLYIVNNKFINTMSQEPRIMQLLPLPPAEDGELKKKSWDYLYEPDPKALLDTLLRRYVESQVYQGVVENLASEQAARMVAMKAATDNGGSLIKELQLVYNKARQASITQELTEIVGGASAV.

The protein belongs to the ATPase gamma chain family. In terms of assembly, F-type ATPases have 2 components, CF(1) - the catalytic core - and CF(0) - the membrane proton channel. CF(1) has five subunits: alpha(3), beta(3), gamma(1), delta(1), epsilon(1). CF(0) has three main subunits: a, b and c.

It localises to the cell inner membrane. Produces ATP from ADP in the presence of a proton gradient across the membrane. The gamma chain is believed to be important in regulating ATPase activity and the flow of protons through the CF(0) complex. The chain is ATP synthase gamma chain from Yersinia enterocolitica serotype O:8 / biotype 1B (strain NCTC 13174 / 8081).